A 179-amino-acid polypeptide reads, in one-letter code: Inner membrane-spanning protein YciB (179 aa).

5 consecutive transmembrane segments (helical) span residues 24–44 (TATGVLMAATVLQMGIIYAME), 49–69 (AMQKATLVLILLFGTLTLVLH), 76–96 (WKPTVLYGAMAIALAVALWAL), 121–141 (VAWIGYCLFMAAINGYVAAYF), and 151–171 (LWGYVFPIVFLVAQGLYISPH).

Belongs to the YciB family.

It localises to the cell inner membrane. Plays a role in cell envelope biogenesis, maintenance of cell envelope integrity and membrane homeostasis. In Variovorax paradoxus (strain S110), this protein is Inner membrane-spanning protein YciB.